The primary structure comprises 507 residues: UDP-glycosyltransferase 73D1 (507 aa).

UDP-alpha-D-glucose is bound by residues serine 298, 359 to 361, 376 to 384, and 398 to 401; these read SPQ, HCGWNSTIE, and FAEQ.

Belongs to the UDP-glycosyltransferase family.

This chain is UDP-glycosyltransferase 73D1 (UGT73D1), found in Arabidopsis thaliana (Mouse-ear cress).